A 311-amino-acid chain; its full sequence is MQRFIKWLAVITSLDLLIVLLGGALVTKTGSGQGCGKSWPLCNGEFVPSNLSMETIIELSHRLTSGSAGILVTLLCILSWKYYKHVRETKTLAILSFVFLVAQALMGAAAVVWGQMPAVLAIHFGISLISFASVILLTCLIFEIDQKFDARSLIMDKKMKFHIYGVTIYSYIVVYTGALVRHERASLACPDFPLCSKNRPMPTQLHEWVQMGHRVAAMLIFAWILYAMILAIRHYKQQPVVYWGWIISFILVTLQAIVGILVVFTNASLSMALLHSLFISCLFAVLCYLVMLGTRSKVNAKEAASISKQTK.

Over 1–6 (MQRFIK) the chain is Cytoplasmic. Residues 7 to 27 (WLAVITSLDLLIVLLGGALVT) traverse the membrane as a helical segment. At 28-62 (KTGSGQGCGKSWPLCNGEFVPSNLSMETIIELSHR) the chain is on the extracellular side. C35 and C42 form a disulfide bridge. Residue E58 is part of the active site. H61 provides a ligand contact to heme o. A helical membrane pass occupies residues 63 to 83 (LTSGSAGILVTLLCILSWKYY). The Cytoplasmic segment spans residues 84 to 91 (KHVRETKT). The chain crosses the membrane as a helical span at residues 92 to 112 (LAILSFVFLVAQALMGAAAVV). Over 113–121 (WGQMPAVLA) the chain is Extracellular. A helical transmembrane segment spans residues 122–142 (IHFGISLISFASVILLTCLIF). H123 lines the heme o pocket. At 143–159 (EIDQKFDARSLIMDKKM) the chain is on the cytoplasmic side. Residues 160 to 180 (KFHIYGVTIYSYIVVYTGALV) form a helical membrane-spanning segment. Residues 181–211 (RHERASLACPDFPLCSKNRPMPTQLHEWVQM) are Extracellular-facing. The cysteines at positions 189 and 195 are disulfide-linked. The chain crosses the membrane as a helical span at residues 212–232 (GHRVAAMLIFAWILYAMILAI). H213 serves as a coordination point for heme b. At 233–243 (RHYKQQPVVYW) the chain is on the cytoplasmic side. Residues 244 to 264 (GWIISFILVTLQAIVGILVVF) traverse the membrane as a helical segment. At 265–271 (TNASLSM) the chain is on the extracellular side. A helical transmembrane segment spans residues 272-292 (ALLHSLFISCLFAVLCYLVML). Residue H275 participates in heme b binding. The Cytoplasmic portion of the chain corresponds to 293–311 (GTRSKVNAKEAASISKQTK).

Belongs to the COX15/CtaA family. Type 1 subfamily. Interacts with CtaB. The cofactor is heme b.

It is found in the cell membrane. The enzyme catalyses Fe(II)-heme o + 2 A + H2O = Fe(II)-heme a + 2 AH2. The protein operates within porphyrin-containing compound metabolism; heme A biosynthesis; heme A from heme O: step 1/1. Its function is as follows. Catalyzes the conversion of heme O to heme A by two successive hydroxylations of the methyl group at C8. The first hydroxylation forms heme I, the second hydroxylation results in an unstable dihydroxymethyl group, which spontaneously dehydrates, resulting in the formyl group of heme A. The protein is Heme A synthase of Bacillus cereus (strain AH187).